The following is a 319-amino-acid chain: Myoblast determination protein 1 (319 aa).

Met1 participates in a covalent cross-link: Peptide (Met-Gly) (interchain with G-Cter in ubiquitin). The residue at position 104 (Lys104) is an N6-methyllysine; by EHMT2. In terms of domain architecture, bHLH spans 109 to 160 (DRRKAATMRERRRLSKVNEAFETLKRCTSSNPNQRLPKVEILRNAIRYIEGL). 2 disordered regions span residues 174-221 (AAAA…SGAR) and 266-319 (APAL…YQVL). Composition is skewed to polar residues over residues 197–207 (SDASSPRSNCS) and 308–319 (ASANPNPIYQVL).

In terms of assembly, efficient DNA binding requires dimerization with another bHLH protein. Seems to form active heterodimers with ITF-2. Interacts with SUV39H1. Interacts with DDX5. Interacts with CHD2. Interacts with TSC22D3. Interacts with SETD3. Interacts with P-TEFB complex; promotes the transcriptional activity of MYOD1 through its CDK9-mediated phosphorylation. Interacts with CSRP3. Interacts with NUPR1. Post-translationally, phosphorylated by CDK9. This phosphorylation promotes its function in muscle differentiation. In terms of processing, acetylated by a complex containing EP300 and PCAF. The acetylation is essential to activate target genes. Conversely, its deacetylation by SIRT1 inhibits its function. Ubiquitinated on the N-terminus; which is required for proteasomal degradation. Post-translationally, methylation at Lys-104 by EHMT2/G9a inhibits myogenic activity.

Its subcellular location is the nucleus. Acts as a transcriptional activator that promotes transcription of muscle-specific target genes and plays a role in muscle differentiation. Together with MYF5 and MYOG, co-occupies muscle-specific gene promoter core region during myogenesis. Induces fibroblasts to differentiate into myoblasts. Interacts with and is inhibited by the twist protein. This interaction probably involves the basic domains of both proteins. The chain is Myoblast determination protein 1 (MYOD1) from Sus scrofa (Pig).